Reading from the N-terminus, the 232-residue chain is Succinyl-CoA:3-ketoacid coenzyme A transferase subunit A (232 aa).

24–30 is a binding site for CoA; that stretch reads GGFGLCG.

This sequence belongs to the 3-oxoacid CoA-transferase subunit A family. As to quaternary structure, heterodimer of a subunit A and a subunit B.

It carries out the reaction a 3-oxo acid + succinyl-CoA = a 3-oxoacyl-CoA + succinate. The chain is Succinyl-CoA:3-ketoacid coenzyme A transferase subunit A (scoA) from Helicobacter pylori (strain ATCC 700392 / 26695) (Campylobacter pylori).